The following is a 196-amino-acid chain: SPRY domain-containing protein 7 (196 aa).

The region spanning 1–184 (MAASVFCCLR…FSEFYHTPPP (184 aa)) is the B30.2/SPRY domain.

The sequence is that of SPRY domain-containing protein 7 (SPRYD7) from Gallus gallus (Chicken).